The chain runs to 298 residues: Putative F-box and FNIP repeat-containing protein R286 (298 aa).

An F-box domain is found at 4 to 48; that stretch reads LNVLESHVILHIIEFLPDHEKIKFMSTCKSLYEFRCHVTYNNFYV. 2 FNIP repeats span residues 124–165 and 255–297; these read FNKP…LGHN and WNFD…FISR.

This chain is Putative F-box and FNIP repeat-containing protein R286, found in Acanthamoeba polyphaga (Amoeba).